A 92-amino-acid polypeptide reads, in one-letter code: Small ribosomal subunit protein uS19c (92 aa).

This sequence belongs to the universal ribosomal protein uS19 family.

It localises to the plastid. The protein resides in the chloroplast. In terms of biological role, protein S19 forms a complex with S13 that binds strongly to the 16S ribosomal RNA. The protein is Small ribosomal subunit protein uS19c of Liriodendron tulipifera (Tuliptree).